The primary structure comprises 500 residues: Probable cytosol aminopeptidase (500 aa).

Mn(2+) contacts are provided by lysine 265 and aspartate 270. Lysine 277 is a catalytic residue. 3 residues coordinate Mn(2+): aspartate 288, aspartate 347, and glutamate 349. Residue arginine 351 is part of the active site.

Belongs to the peptidase M17 family. Mn(2+) serves as cofactor.

Its subcellular location is the cytoplasm. It catalyses the reaction Release of an N-terminal amino acid, Xaa-|-Yaa-, in which Xaa is preferably Leu, but may be other amino acids including Pro although not Arg or Lys, and Yaa may be Pro. Amino acid amides and methyl esters are also readily hydrolyzed, but rates on arylamides are exceedingly low.. The catalysed reaction is Release of an N-terminal amino acid, preferentially leucine, but not glutamic or aspartic acids.. Functionally, presumably involved in the processing and regular turnover of intracellular proteins. Catalyzes the removal of unsubstituted N-terminal amino acids from various peptides. The chain is Probable cytosol aminopeptidase from Rickettsia africae (strain ESF-5).